We begin with the raw amino-acid sequence, 446 residues long: Tripartite motif-containing protein 43B (446 aa).

The RING-type zinc finger occupies 15–56 (CVICLNYLVDPVTICCGHSFCRPCLCLSWEEAQSPANCPACR). The B box-type zinc finger occupies 88–129 (SEKQICGTHRQTKKMFCDMDKSLLCLLCSNSQEHGAHKHYPI). The Zn(2+) site is built by cysteine 93, histidine 96, cysteine 115, and histidine 121. Coiled coils occupy residues 129 to 158 (IEEA…QRNL) and 190 to 220 (LHKE…VKMD). The 178-residue stretch at 269 to 446 (ELTAGPITGL…VRPFFYTGHR (178 aa)) folds into the B30.2/SPRY domain.

The protein belongs to the TRIM/RBCC family.

The chain is Tripartite motif-containing protein 43B (TRIM43B) from Homo sapiens (Human).